A 368-amino-acid chain; its full sequence is Chaperone protein DnaJ (368 aa).

One can recognise a J domain in the interval 5–65; it reads DYYEVLGLTK…QKKARYDQFG (61 aa). The CR-type zinc finger occupies 125 to 207; it reads GKETEIEIPK…CRGEGKVQKR (83 aa). Zn(2+) contacts are provided by Cys138, Cys141, Cys155, Cys158, Cys181, Cys184, Cys195, and Cys198. CXXCXGXG motif repeat units lie at residues 138-145, 155-162, 181-188, and 195-202; these read CETCHGSG, CSTCNGAG, CTTCHGTG, and CSTCRGEG.

It belongs to the DnaJ family. In terms of assembly, homodimer. Requires Zn(2+) as cofactor.

Its subcellular location is the cytoplasm. Participates actively in the response to hyperosmotic and heat shock by preventing the aggregation of stress-denatured proteins and by disaggregating proteins, also in an autonomous, DnaK-independent fashion. Unfolded proteins bind initially to DnaJ; upon interaction with the DnaJ-bound protein, DnaK hydrolyzes its bound ATP, resulting in the formation of a stable complex. GrpE releases ADP from DnaK; ATP binding to DnaK triggers the release of the substrate protein, thus completing the reaction cycle. Several rounds of ATP-dependent interactions between DnaJ, DnaK and GrpE are required for fully efficient folding. Also involved, together with DnaK and GrpE, in the DNA replication of plasmids through activation of initiation proteins. This is Chaperone protein DnaJ from Lysinibacillus sphaericus (Bacillus sphaericus).